Here is a 384-residue protein sequence, read N- to C-terminus: Calreticulin-3 (384 aa).

Positions 1–19 (MARALVQLWAICMLRVALA) are cleaved as a signal peptide. Residues 20-197 (TVYFQEEFLD…GQSIESGSIE (178 aa)) form an N-domain region. A glycan (N-linked (GlcNAc...) asparagine) is linked at asparagine 42. A disulfide bond links cysteine 105 and cysteine 137. Residues tyrosine 109, lysine 111, tyrosine 128, and aspartate 135 each contribute to the an alpha-D-glucoside site. 7 tandem repeats follow at residues 191–202 (IESGSIEYDWNL), 208–219 (ETSPAESKDWEQ), 221–230 (KDNKAQDWEK), 234–245 (DASTSKQSDWNG), 249–259 (GDWPAPMLQKP), 263–271 (DGLKPEGIH), and 273–283 (DVWLHRKMKNT). The interval 191–245 (IESGSIEYDWNLTSLKKETSPAESKDWEQTKDNKAQDWEKHFLDASTSKQSDWNG) is 4 X approximate repeats. The interval 198 to 294 (YDWNLTSLKK…YLTQYDLSEF (97 aa)) is P-domain. Asparagine 201 carries an N-linked (GlcNAc...) asparagine glycan. The segment at 249 to 283 (GDWPAPMLQKPPYQDGLKPEGIHKDVWLHRKMKNT) is 3 X approximate repeats. A C-domain region spans residues 295–384 (ENIGAIGLEL…FNQFHRRNEL (90 aa)). Glutamate 303 provides a ligand contact to an alpha-D-glucoside. The Prevents secretion from ER motif lies at 381 to 384 (RNEL).

It belongs to the calreticulin family. Component of an EIF2 complex at least composed of CELF1/CUGBP1, CALR, CALR3, EIF2S1, EIF2S2, HSP90B1 and HSPA5. In terms of tissue distribution, testis specific.

The protein localises to the endoplasmic reticulum lumen. In terms of biological role, during spermatogenesis, may act as a lectin-independent chaperone for specific client proteins such as ADAM3. Required for sperm fertility. CALR3 capacity for calcium-binding may be absent or much lower than that of CALR. In Homo sapiens (Human), this protein is Calreticulin-3 (CALR3).